The primary structure comprises 258 residues: Ribosomal RNA small subunit methyltransferase A (258 aa).

S-adenosyl-L-methionine-binding residues include Asn12, Leu14, Gly38, Glu59, Asp83, and Asn100.

This sequence belongs to the class I-like SAM-binding methyltransferase superfamily. rRNA adenine N(6)-methyltransferase family. RsmA subfamily.

The protein resides in the cytoplasm. The enzyme catalyses adenosine(1518)/adenosine(1519) in 16S rRNA + 4 S-adenosyl-L-methionine = N(6)-dimethyladenosine(1518)/N(6)-dimethyladenosine(1519) in 16S rRNA + 4 S-adenosyl-L-homocysteine + 4 H(+). In terms of biological role, specifically dimethylates two adjacent adenosines (A1518 and A1519) in the loop of a conserved hairpin near the 3'-end of 16S rRNA in the 30S particle. May play a critical role in biogenesis of 30S subunits. This chain is Ribosomal RNA small subunit methyltransferase A, found in Metamycoplasma arthritidis (strain 158L3-1) (Mycoplasma arthritidis).